An 83-amino-acid polypeptide reads, in one-letter code: Toxin To15 (83 aa).

An N-terminal signal peptide occupies residues 1–19; the sequence is MKGIILLISCLMLIEVVVG. The region spanning 21–82 is the LCN-type CS-alpha/beta domain; it reads KEGYPLDSSG…IWNAKTNKCY (62 aa). Disulfide bonds link Cys-31–Cys-81, Cys-35–Cys-57, Cys-43–Cys-62, and Cys-47–Cys-64.

Belongs to the long (4 C-C) scorpion toxin superfamily. Sodium channel inhibitor family. Beta subfamily. Expressed by the venom gland.

It localises to the secreted. In terms of biological role, beta toxins bind voltage-independently at site-4 of sodium channels (Nav) and shift the voltage of activation toward more negative potentials thereby affecting sodium channel activation and promoting spontaneous and repetitive firing. This is Toxin To15 from Tityus obscurus (Amazonian scorpion).